We begin with the raw amino-acid sequence, 404 residues long: MMTYEYILVRYGEMTTKGKNRSKFVSTLKDNVKFKLKKFPNIKIDATHDRMYIQLNGEDHEAVSERLKDVFGIHKFNLAMKVPSELEDIKKGALAAFLQVKGDVKTFKITVHRSYKHFPMRTMELLPEIGGHILENTEDITVDVHNPDVNVRVEIRSGYSYIMCDERMGAGGLPVGVGGKVMVLLSGGIDSPVAAYLTMKRGVSVEAVHFHSPPFTSERAKQKVIDLAQELTKYCKRVTLHLVPFTEVQKTINKEIPSSYSMTVMRRMMMRITERIAEERNALAITTGESLGQVASQTLDSMHTINEVTNYPVIRPLITMDKLEIIKIAEEIGTYEISIRPYEDCCTVFTPASPATKPKREKANRFEAKYDFTPLIDEAVANKETMVLQTVEVVAEEEKFEELF.

The THUMP domain occupies 61–166 (EAVSERLKDV…SGYSYIMCDE (106 aa)). Residues 184–185 (LL), 209–210 (HF), arginine 266, glycine 288, and glutamine 297 each bind ATP.

It belongs to the ThiI family.

It is found in the cytoplasm. The catalysed reaction is [ThiI sulfur-carrier protein]-S-sulfanyl-L-cysteine + a uridine in tRNA + 2 reduced [2Fe-2S]-[ferredoxin] + ATP + H(+) = [ThiI sulfur-carrier protein]-L-cysteine + a 4-thiouridine in tRNA + 2 oxidized [2Fe-2S]-[ferredoxin] + AMP + diphosphate. It catalyses the reaction [ThiS sulfur-carrier protein]-C-terminal Gly-Gly-AMP + S-sulfanyl-L-cysteinyl-[cysteine desulfurase] + AH2 = [ThiS sulfur-carrier protein]-C-terminal-Gly-aminoethanethioate + L-cysteinyl-[cysteine desulfurase] + A + AMP + 2 H(+). Its pathway is cofactor biosynthesis; thiamine diphosphate biosynthesis. In terms of biological role, catalyzes the ATP-dependent transfer of a sulfur to tRNA to produce 4-thiouridine in position 8 of tRNAs, which functions as a near-UV photosensor. Also catalyzes the transfer of sulfur to the sulfur carrier protein ThiS, forming ThiS-thiocarboxylate. This is a step in the synthesis of thiazole, in the thiamine biosynthesis pathway. The sulfur is donated as persulfide by IscS. The chain is Probable tRNA sulfurtransferase from Bacillus cereus (strain ZK / E33L).